Reading from the N-terminus, the 158-residue chain is Ribosome-binding factor A (158 aa).

The disordered stretch occupies residues 130–158; that stretch reads TAQYAGDADPYKHDDEAEAEGDEFESDEE. Acidic residues predominate over residues 145 to 158; it reads EAEAEGDEFESDEE.

The protein belongs to the RbfA family. As to quaternary structure, monomer. Binds 30S ribosomal subunits, but not 50S ribosomal subunits or 70S ribosomes.

The protein resides in the cytoplasm. One of several proteins that assist in the late maturation steps of the functional core of the 30S ribosomal subunit. Associates with free 30S ribosomal subunits (but not with 30S subunits that are part of 70S ribosomes or polysomes). Required for efficient processing of 16S rRNA. May interact with the 5'-terminal helix region of 16S rRNA. This is Ribosome-binding factor A from Bifidobacterium longum subsp. infantis (strain ATCC 15697 / DSM 20088 / JCM 1222 / NCTC 11817 / S12).